Consider the following 585-residue polypeptide: A-type ATP synthase subunit A (585 aa).

Residues 192 to 211 are disordered; that stretch reads MRQEWPVREPRPTVEKKTPR. The span at 196-211 shows a compositional bias: basic and acidic residues; the sequence is WPVREPRPTVEKKTPR. 237-244 contributes to the ATP binding site; sequence GPFGSGKT.

This sequence belongs to the ATPase alpha/beta chains family. In terms of assembly, has multiple subunits with at least A(3), B(3), C, D, E, F, H, I and proteolipid K(x).

The protein resides in the cell membrane. It catalyses the reaction ATP + H2O + 4 H(+)(in) = ADP + phosphate + 5 H(+)(out). In terms of biological role, component of the A-type ATP synthase that produces ATP from ADP in the presence of a proton gradient across the membrane. The A chain is the catalytic subunit. In Haloquadratum walsbyi (strain DSM 16790 / HBSQ001), this protein is A-type ATP synthase subunit A.